Consider the following 819-residue polypeptide: Leucine--tRNA ligase (819 aa).

A 'HIGH' region motif is present at residues 40–51; that stretch reads PYPSGAGLHVGH. The 'KMSKS' region signature appears at 600–604; it reads KMSKS. Residue lysine 603 coordinates ATP.

This sequence belongs to the class-I aminoacyl-tRNA synthetase family.

Its subcellular location is the cytoplasm. It carries out the reaction tRNA(Leu) + L-leucine + ATP = L-leucyl-tRNA(Leu) + AMP + diphosphate. This is Leucine--tRNA ligase from Chlamydia trachomatis serovar A (strain ATCC VR-571B / DSM 19440 / HAR-13).